The chain runs to 453 residues: Na(+)/H(+) antiporter NhaA (453 aa).

The next 12 membrane-spanning stretches (helical) occupy residues 27–47 (FLHI…AALM), 78–98 (LHFW…GMEI), 114–134 (ILPI…YFSF), 143–163 (GWAV…ALLG), 172–192 (IILL…IAFF), 201–221 (GLVI…IGFA), 222–242 (SAWL…VTGI), 249–269 (VILG…PLTI), 316–336 (PWVA…VSFA), 346–366 (FLIV…GIIT), 385–405 (WAGI…SIFV), and 421–441 (IGVL…GLIY).

This sequence belongs to the NhaA Na(+)/H(+) (TC 2.A.33) antiporter family.

Its subcellular location is the cell inner membrane. The enzyme catalyses Na(+)(in) + 2 H(+)(out) = Na(+)(out) + 2 H(+)(in). Its function is as follows. Na(+)/H(+) antiporter that extrudes sodium in exchange for external protons. The chain is Na(+)/H(+) antiporter NhaA from Bartonella henselae (strain ATCC 49882 / DSM 28221 / CCUG 30454 / Houston 1) (Rochalimaea henselae).